A 310-amino-acid polypeptide reads, in one-letter code: Syntaxin-81 (310 aa).

Residues 1-289 (MSRFRDRTED…QAIQRNSSSR (289 aa)) lie on the Cytoplasmic side of the membrane. A coiled-coil region spans residues 77 to 114 (RTTEQEKDSIEQEVAAFIKACKEQIDILINSIRNEEAN). Residues 290–310 (TFLLLFFFVLTFSVLFLDWYS) traverse the membrane as a helical; Anchor for type IV membrane protein segment.

Belongs to the syntaxin family. In terms of assembly, part of the t-SNARE complex. Interacts with MAG2.

The protein resides in the membrane. Functionally, vesicle trafficking protein that functions in the secretory pathway. This Arabidopsis thaliana (Mouse-ear cress) protein is Syntaxin-81 (SYP81).